The primary structure comprises 406 residues: Phosphopentomutase (406 aa).

Mn(2+) contacts are provided by Asp-10, Asp-305, His-310, Asp-346, His-347, and His-358.

The protein belongs to the phosphopentomutase family. It depends on Mn(2+) as a cofactor.

Its subcellular location is the cytoplasm. It carries out the reaction 2-deoxy-alpha-D-ribose 1-phosphate = 2-deoxy-D-ribose 5-phosphate. The catalysed reaction is alpha-D-ribose 1-phosphate = D-ribose 5-phosphate. It participates in carbohydrate degradation; 2-deoxy-D-ribose 1-phosphate degradation; D-glyceraldehyde 3-phosphate and acetaldehyde from 2-deoxy-alpha-D-ribose 1-phosphate: step 1/2. In terms of biological role, isomerase that catalyzes the conversion of deoxy-ribose 1-phosphate (dRib-1-P) and ribose 1-phosphate (Rib-1-P) to deoxy-ribose 5-phosphate (dRib-5-P) and ribose 5-phosphate (Rib-5-P), respectively. This is Phosphopentomutase from Aliivibrio fischeri (strain MJ11) (Vibrio fischeri).